The following is a 410-amino-acid chain: Beta-arrestin-1 (410 aa).

The segment at 1-163 (MGDKGTRVFK…LEEKIHKRNS (163 aa)) is interaction with SRC. The segment at 45 to 86 (PEYLKERRVYVTLTCAFRYGREDLDVLGLTFRKDLFVANVQS) is interaction with CHRM2. Tyrosine 47 is subject to Phosphotyrosine. Lysine 250, methionine 255, lysine 324, and lysine 326 together coordinate 1D-myo-inositol hexakisphosphate. Residues 318 to 410 (IVSYKVKVKL…GTGSPQLNNR (93 aa)) are interaction with TRAF6. Positions 385–395 (RQRLKGMKDDK) match the [DE]-X(1,2)-F-X-X-[FL]-X-X-X-R motif motif. Residues 389 to 410 (KGMKDDKEEEENGTGSPQLNNR) are disordered. Over residues 401–410 (GTGSPQLNNR) the composition is skewed to polar residues. The residue at position 404 (serine 404) is a Phosphoserine; by GRK5.

It belongs to the arrestin family. As to quaternary structure, monomer. Homodimer. Homooligomer; the self-association is mediated by InsP6-binding. Heterooligomer with ARRB2; the association is mediated by InsP6-binding. Interacts with ADRB2 (phosphorylated). Interacts with CHRM2 (phosphorylated). Interacts with LHCGR. Interacts with CYTH2 and CASR. Interacts with AP2B1 (dephosphorylated); phosphorylation of AP2B1 disrupts the interaction. Interacts (dephosphorylated at Ser-404) with CLTC. Interacts with CCR2 and GRK2. Interacts with CRR5. Interacts with PTAFR (phosphorylated on serine residues). Interacts with CLTC and MAP2K3. Interacts with CREB1. Interacts with TRAF6. Interacts with IGF1R and MDM2. Interacts with C5AR1. Interacts with PDE4D. Interacts with SRC (via the SH3 domain and the protein kinase domain); the interaction is independent of the phosphorylation state of SRC C-terminus. Interacts with TACR1. Interacts with RAF1. Interacts with CHUK, IKBKB and MAP3K14. Interacts with DVL1; the interaction is enhanced by phosphorylation of DVL1. Interacts with DVL2; the interaction is enhanced by phosphorylation of DVL2. Interacts with IGF1R. Associates with MAP kinase p38. Part of a MAPK signaling complex consisting of TACR1, ARRB1, SRC, MAPK1 (activated) and MAPK3 (activated). Part of a MAPK signaling complex consisting of F2RL1, ARRB1, RAF1, MAPK1 (activated) and MAPK3 (activated). Interacts with GPR143. Interacts with MAP2K4/MKK4. Interacts with HCK and CXCR1 (phosphorylated). Interacts with ACKR3 and ACKR4. Interacts with ARRDC1; the interaction is direct. Interacts with GPR61, GPR62 and GPR135. Constitutively phosphorylated at in the cytoplasm. At the plasma membrane, is rapidly dephosphorylated, a process that is required for clathrin binding and ADRB2 endocytosis but not for ADRB2 binding and desensitization. Once internalized, is rephosphorylated. In terms of processing, the ubiquitination status appears to regulate the formation and trafficking of beta-arrestin-GPCR complexes and signaling. Ubiquitination appears to occur GPCR-specific. Ubiquitinated by MDM2; the ubiquitination is required for rapid internalization of ADRB2. Deubiquitinated by USP33; the deubiquitination leads to a dissociation of the beta-arrestin-GPCR complex. Stimulation of a class A GPCR, such as ADRB2, induces transient ubiquitination and subsequently promotes association with USP33.

Its subcellular location is the cytoplasm. It is found in the nucleus. The protein localises to the cell membrane. It localises to the membrane. The protein resides in the clathrin-coated pit. Its subcellular location is the cell projection. It is found in the pseudopodium. The protein localises to the cytoplasmic vesicle. Functions in regulating agonist-mediated G-protein coupled receptor (GPCR) signaling by mediating both receptor desensitization and resensitization processes. During homologous desensitization, beta-arrestins bind to the GPRK-phosphorylated receptor and sterically preclude its coupling to the cognate G-protein; the binding appears to require additional receptor determinants exposed only in the active receptor conformation. The beta-arrestins target many receptors for internalization by acting as endocytic adapters (CLASPs, clathrin-associated sorting proteins) and recruiting the GPRCs to the adapter protein 2 complex 2 (AP-2) in clathrin-coated pits (CCPs). However, the extent of beta-arrestin involvement appears to vary significantly depending on the receptor, agonist and cell type. Internalized arrestin-receptor complexes traffic to intracellular endosomes, where they remain uncoupled from G-proteins. Two different modes of arrestin-mediated internalization occur. Class A receptors, like ADRB2, OPRM1, ENDRA, D1AR and ADRA1B dissociate from beta-arrestin at or near the plasma membrane and undergo rapid recycling. Class B receptors, like AVPR2, AGTR1, NTSR1, TRHR and TACR1 internalize as a complex with arrestin and traffic with it to endosomal vesicles, presumably as desensitized receptors, for extended periods of time. Receptor resensitization then requires that receptor-bound arrestin is removed so that the receptor can be dephosphorylated and returned to the plasma membrane. Involved in internalization of P2RY4 and UTP-stimulated internalization of P2RY2. Involved in phosphorylation-dependent internalization of OPRD1 ands subsequent recycling. Involved in the degradation of cAMP by recruiting cAMP phosphodiesterases to ligand-activated receptors. Beta-arrestins function as multivalent adapter proteins that can switch the GPCR from a G-protein signaling mode that transmits short-lived signals from the plasma membrane via small molecule second messengers and ion channels to a beta-arrestin signaling mode that transmits a distinct set of signals that are initiated as the receptor internalizes and transits the intracellular compartment. Acts as a signaling scaffold for MAPK pathways such as MAPK1/3 (ERK1/2). ERK1/2 activated by the beta-arrestin scaffold is largely excluded from the nucleus and confined to cytoplasmic locations such as endocytic vesicles, also called beta-arrestin signalosomes. Recruits c-Src/SRC to ADRB2 resulting in ERK activation. GPCRs for which the beta-arrestin-mediated signaling relies on both ARRB1 and ARRB2 (codependent regulation) include ADRB2, F2RL1 and PTH1R. For some GPCRs the beta-arrestin-mediated signaling relies on either ARRB1 or ARRB2 and is inhibited by the other respective beta-arrestin form (reciprocal regulation). Inhibits ERK1/2 signaling in AGTR1- and AVPR2-mediated activation (reciprocal regulation). Is required for SP-stimulated endocytosis of NK1R and recruits c-Src/SRC to internalized NK1R resulting in ERK1/2 activation, which is required for the antiapoptotic effects of SP. Is involved in proteinase-activated F2RL1-mediated ERK activity. Acts as a signaling scaffold for the AKT1 pathway. Is involved in alpha-thrombin-stimulated AKT1 signaling. Is involved in IGF1-stimulated AKT1 signaling leading to increased protection from apoptosis. Involved in activation of the p38 MAPK signaling pathway and in actin bundle formation. Involved in F2RL1-mediated cytoskeletal rearrangement and chemotaxis. Involved in AGTR1-mediated stress fiber formation by acting together with GNAQ to activate RHOA. Appears to function as signaling scaffold involved in regulation of MIP-1-beta-stimulated CCR5-dependent chemotaxis. Involved in attenuation of NF-kappa-B-dependent transcription in response to GPCR or cytokine stimulation by interacting with and stabilizing CHUK. May serve as nuclear messenger for GPCRs. Involved in OPRD1-stimulated transcriptional regulation by translocating to CDKN1B and FOS promoter regions and recruiting EP300 resulting in acetylation of histone H4. Involved in regulation of LEF1 transcriptional activity via interaction with DVL1 and/or DVL2 Also involved in regulation of receptors other than GPCRs. Involved in Toll-like receptor and IL-1 receptor signaling through the interaction with TRAF6 which prevents TRAF6 autoubiquitination and oligomerization required for activation of NF-kappa-B and JUN. Involved in IL8-mediated granule release in neutrophils. Binds phosphoinositides. Binds inositolhexakisphosphate (InsP6). Required for atypical chemokine receptor ACKR2-induced RAC1-LIMK1-PAK1-dependent phosphorylation of cofilin (CFL1) and for the up-regulation of ACKR2 from endosomal compartment to cell membrane, increasing its efficiency in chemokine uptake and degradation. Involved in the internalization of the atypical chemokine receptor ACKR3. Negatively regulates the NOTCH signaling pathway by mediating the ubiquitination and degradation of NOTCH1 by ITCH. Participates in the recruitment of the ubiquitin-protein ligase to the receptor. The chain is Beta-arrestin-1 (ARRB1) from Macaca fascicularis (Crab-eating macaque).